A 428-amino-acid polypeptide reads, in one-letter code: Histidinol dehydrogenase (428 aa).

Positions 234, 256, and 259 each coordinate substrate. Residues glutamine 256 and histidine 259 each contribute to the Zn(2+) site. Residues glutamate 323 and histidine 324 each act as proton acceptor in the active site. Residues histidine 324, aspartate 357, glutamate 411, and histidine 416 each coordinate substrate. Aspartate 357 serves as a coordination point for Zn(2+). Residue histidine 416 participates in Zn(2+) binding.

This sequence belongs to the histidinol dehydrogenase family. Zn(2+) is required as a cofactor.

It carries out the reaction L-histidinol + 2 NAD(+) + H2O = L-histidine + 2 NADH + 3 H(+). It participates in amino-acid biosynthesis; L-histidine biosynthesis; L-histidine from 5-phospho-alpha-D-ribose 1-diphosphate: step 9/9. Its function is as follows. Catalyzes the sequential NAD-dependent oxidations of L-histidinol to L-histidinaldehyde and then to L-histidine. The chain is Histidinol dehydrogenase from Campylobacter jejuni subsp. jejuni serotype O:2 (strain ATCC 700819 / NCTC 11168).